The chain runs to 142 residues: Small ribosomal subunit protein uS12 (142 aa).

Belongs to the universal ribosomal protein uS12 family. In terms of assembly, part of the 30S ribosomal subunit.

In terms of biological role, with S4 and S5 plays an important role in translational accuracy. Located at the interface of the 30S and 50S subunits. The sequence is that of Small ribosomal subunit protein uS12 from Archaeoglobus fulgidus (strain ATCC 49558 / DSM 4304 / JCM 9628 / NBRC 100126 / VC-16).